A 517-amino-acid chain; its full sequence is GMP synthase [glutamine-hydrolyzing] (517 aa).

The Glutamine amidotransferase type-1 domain occupies 9–199 (RILILDFGSQ…VLNACGCEGL (191 aa)). C86 functions as the Nucleophile in the catalytic mechanism. Catalysis depends on residues H173 and E175. The region spanning 200 to 392 (WTSASIIEDA…LGLPYNMLYR (193 aa)) is the GMPS ATP-PPase domain. 227–233 (SGGVDSS) lines the ATP pocket.

As to quaternary structure, homodimer.

The enzyme catalyses XMP + L-glutamine + ATP + H2O = GMP + L-glutamate + AMP + diphosphate + 2 H(+). It functions in the pathway purine metabolism; GMP biosynthesis; GMP from XMP (L-Gln route): step 1/1. In terms of biological role, catalyzes the synthesis of GMP from XMP. The protein is GMP synthase [glutamine-hydrolyzing] of Vibrio atlanticus (strain LGP32) (Vibrio splendidus (strain Mel32)).